Here is a 368-residue protein sequence, read N- to C-terminus: Glutamate 5-kinase (368 aa).

Residue Lys-10 coordinates ATP. Residues Ser-50, Asp-137, and Asn-149 each coordinate substrate. 169 to 170 contributes to the ATP binding site; sequence TD. One can recognise a PUA domain in the interval 276 to 354; it reads RGTLVLDDGA…ESIVRELGYM (79 aa).

Belongs to the glutamate 5-kinase family.

The protein localises to the cytoplasm. It catalyses the reaction L-glutamate + ATP = L-glutamyl 5-phosphate + ADP. Its pathway is amino-acid biosynthesis; L-proline biosynthesis; L-glutamate 5-semialdehyde from L-glutamate: step 1/2. In terms of biological role, catalyzes the transfer of a phosphate group to glutamate to form L-glutamate 5-phosphate. The chain is Glutamate 5-kinase from Pseudomonas savastanoi pv. phaseolicola (strain 1448A / Race 6) (Pseudomonas syringae pv. phaseolicola (strain 1448A / Race 6)).